We begin with the raw amino-acid sequence, 420 residues long: DNA repair protein RadA (420 aa).

62–69 provides a ligand contact to ATP; that stretch reads GDPGIGKS. The short motif at 218 to 222 is the RadA KNRFG motif element; it reads KNRFG. Positions 317–420 are lon-protease-like; the sequence is DAYLKSAGGV…IQEVLKKVFA (104 aa).

This sequence belongs to the RecA family. RadA subfamily.

Functionally, plays a role in repairing double-strand DNA breaks, probably involving stabilizing or processing branched DNA or blocked replication forks. Required for efficient transformation with chromosomal (linear) DNA, but not for replicative plasmid DNA. Its increased sensitivity to a DNA damaging agent suggests it may be required for DNA repair. The protein is DNA repair protein RadA of Streptococcus pneumoniae (strain ATCC BAA-255 / R6).